The following is a 337-amino-acid chain: 2-oxoglutarate-Fe(II) type oxidoreductase (337 aa).

Residues 179 to 282 (AIATLRYLHY…RYSIPFFFTG (104 aa)) form the Fe2OG dioxygenase domain. Residues histidine 205, aspartate 207, and histidine 263 each coordinate Fe cation. Residue arginine 273 participates in 2-oxoglutarate binding.

The protein belongs to the iron/ascorbate-dependent oxidoreductase family. The cofactor is Fe(2+). In terms of tissue distribution, endocrocin is specifically produced in conidia.

It participates in secondary metabolite biosynthesis. In terms of biological role, 2-oxoglutarate-Fe(II) type oxidoreductase; part of the gene cluster that mediates the biosynthesis of endocrocin, a simple anthraquinone interesting for many biotechnological applications. The pathway begins with the synthesis of atrochrysone thioester by the polyketide synthase (PKS) encA. The atrochrysone carboxyl ACP thioesterase encB then breaks the thioester bond and releases the atrochrysone carboxylic acid from encA. The atrochrysone carboxylic acid is then converted to endocrocin anthrone which is further oxidized into endocrocin by encC. The exact function of encD has not been identified yet, but it negatively regulates endocrocin production, likely through the modification of endocrocin itself. The polypeptide is 2-oxoglutarate-Fe(II) type oxidoreductase (Aspergillus fumigatus (strain ATCC MYA-4609 / CBS 101355 / FGSC A1100 / Af293) (Neosartorya fumigata)).